A 308-amino-acid chain; its full sequence is D-alanine--D-alanine ligase (308 aa).

The 201-residue stretch at 102–302 (KKVAAAAGIP…FGDLVSWMVE (201 aa)) folds into the ATP-grasp domain. 128 to 183 (PLQPPYVVKPVREGSSFGVVIVKEDQSHPPQILTSSEWPFGNQVMVERYIHGRELT) provides a ligand contact to ATP. D252, E269, and N271 together coordinate Mg(2+).

Belongs to the D-alanine--D-alanine ligase family. Mg(2+) serves as cofactor. The cofactor is Mn(2+).

The protein localises to the cytoplasm. The enzyme catalyses 2 D-alanine + ATP = D-alanyl-D-alanine + ADP + phosphate + H(+). It participates in cell wall biogenesis; peptidoglycan biosynthesis. Cell wall formation. This is D-alanine--D-alanine ligase from Agrobacterium fabrum (strain C58 / ATCC 33970) (Agrobacterium tumefaciens (strain C58)).